A 300-amino-acid polypeptide reads, in one-letter code: Haloalkane dehalogenase 1 (300 aa).

One can recognise an AB hydrolase-1 domain in the interval 47 to 176 (PPIVLLHGEP…FARYSPVLPA (130 aa)). Asp-123 serves as the catalytic Nucleophile. Asp-250 functions as the Proton donor in the catalytic mechanism. The active-site Proton acceptor is the His-279.

The protein belongs to the haloalkane dehalogenase family. Type 1 subfamily. As to quaternary structure, monomer.

It carries out the reaction 1-haloalkane + H2O = a halide anion + a primary alcohol + H(+). In terms of biological role, catalyzes hydrolytic cleavage of carbon-halogen bonds in halogenated aliphatic compounds, leading to the formation of the corresponding primary alcohols, halide ions and protons. This chain is Haloalkane dehalogenase 1 (dhmA1), found in Mycobacterium bovis (strain ATCC BAA-935 / AF2122/97).